The following is a 21-amino-acid chain: Major outer membrane protein P44 (21 aa).

As to quaternary structure, monomer.

It is found in the cell outer membrane. The polypeptide is Major outer membrane protein P44 (Mannheimia haemolytica (Pasteurella haemolytica)).